Reading from the N-terminus, the 78-residue chain is D-alanyl carrier protein (78 aa).

Positions 1–78 (MEFRDQVLDL…KIVAVLEELR (78 aa)) constitute a Carrier domain. Serine 36 is modified (O-(pantetheine 4'-phosphoryl)serine).

The protein belongs to the DltC family. 4'-phosphopantetheine is transferred from CoA to a specific serine of apo-DCP.

Its subcellular location is the cytoplasm. Its pathway is cell wall biogenesis; lipoteichoic acid biosynthesis. Its function is as follows. Carrier protein involved in the D-alanylation of lipoteichoic acid (LTA). The loading of thioester-linked D-alanine onto DltC is catalyzed by D-alanine--D-alanyl carrier protein ligase DltA. The DltC-carried D-alanyl group is further transferred to cell membrane phosphatidylglycerol (PG) by forming an ester bond, probably catalyzed by DltD. D-alanylation of LTA plays an important role in modulating the properties of the cell wall in Gram-positive bacteria, influencing the net charge of the cell wall. The polypeptide is D-alanyl carrier protein (Staphylococcus saprophyticus subsp. saprophyticus (strain ATCC 15305 / DSM 20229 / NCIMB 8711 / NCTC 7292 / S-41)).